We begin with the raw amino-acid sequence, 179 residues long: Ribulose bisphosphate carboxylase small subunit, chloroplastic 5 (179 aa).

Residues 1-58 (MASSATMLSSVATAACAAPAQASMVAPFVGLKSASAFPVTQKTATGLSTLPSNGGRVQ) constitute a chloroplast transit peptide.

This sequence belongs to the RuBisCO small chain family. As to quaternary structure, heterohexadecamer of 8 large and 8 small subunits.

The protein resides in the plastid. The protein localises to the chloroplast. In terms of biological role, ruBisCO catalyzes two reactions: the carboxylation of D-ribulose 1,5-bisphosphate, the primary event in carbon dioxide fixation, as well as the oxidative fragmentation of the pentose substrate. Both reactions occur simultaneously and in competition at the same active site. Although the small subunit is not catalytic it is essential for maximal activity. The sequence is that of Ribulose bisphosphate carboxylase small subunit, chloroplastic 5 from Fritillaria agrestis (Stinkbells).